The sequence spans 85 residues: Large ribosomal subunit protein bL27 (85 aa).

The segment at 1-23 (MAHKKGQGSTQNNRDSAGRRLGV) is disordered.

This sequence belongs to the bacterial ribosomal protein bL27 family.

The chain is Large ribosomal subunit protein bL27 from Aliarcobacter butzleri (strain RM4018) (Arcobacter butzleri).